The primary structure comprises 172 residues: Translation initiation factor IF-3 (172 aa).

It belongs to the IF-3 family. As to quaternary structure, monomer.

It is found in the cytoplasm. IF-3 binds to the 30S ribosomal subunit and shifts the equilibrium between 70S ribosomes and their 50S and 30S subunits in favor of the free subunits, thus enhancing the availability of 30S subunits on which protein synthesis initiation begins. The polypeptide is Translation initiation factor IF-3 (Campylobacter curvus (strain 525.92)).